The primary structure comprises 748 residues: Polyribonucleotide nucleotidyltransferase (748 aa).

Mg(2+)-binding residues include D522 and D528. One can recognise a KH domain in the interval 588–647 (PRVTTIRVPVDKIGEVIGPKGKIINAITEETGAQISIEDDGTVFVGATDGPSAQAAIDRI). Residues 659–728 (GERFLGTVVK…KRGKISLVLV (70 aa)) enclose the S1 motif domain.

It belongs to the polyribonucleotide nucleotidyltransferase family. The cofactor is Mg(2+).

It localises to the cytoplasm. It catalyses the reaction RNA(n+1) + phosphate = RNA(n) + a ribonucleoside 5'-diphosphate. Involved in mRNA degradation. Catalyzes the phosphorolysis of single-stranded polyribonucleotides processively in the 3'- to 5'-direction. The protein is Polyribonucleotide nucleotidyltransferase of Mycobacterium avium (strain 104).